Reading from the N-terminus, the 215-residue chain is Beta-crystallin A3 (215 aa).

Position 1 is an N-acetylmethionine (methionine 1). The segment covering 1 to 16 has biased composition (low complexity); that stretch reads METQAEQQELETLPTT. The segment at 1 to 29 is disordered; the sequence is METQAEQQELETLPTTKMAQTNPTPGSLG. The N-terminal arm stretch occupies residues 1 to 30; sequence METQAEQQELETLPTTKMAQTNPTPGSLGP. Position 2 is an N-acetylalanine (glutamate 2). Beta/gamma crystallin 'Greek key' domains lie at 31–70 and 71–117; these read WKIT…KVES and GAWI…RPIC. S-glutathionyl cysteine; alternate occurs at positions 82 and 117. Cysteine 82 and cysteine 117 each carry S-methylcysteine; alternate. A connecting peptide region spans residues 118-123; the sequence is SANHKE. Beta/gamma crystallin 'Greek key' domains follow at residues 124–165 and 166–214; these read SKMT…KIQS and GAWV…RRIQ. Cysteine 185 bears the S-methylcysteine mark.

It belongs to the beta/gamma-crystallin family. In terms of assembly, homo/heterodimer, or complexes of higher-order. The structure of beta-crystallin oligomers seems to be stabilized through interactions between the N-terminal arms. Interacts with CRYBA1. Specific cleavages in the N-terminal arm occur during lens maturation and give rise to several truncated forms. Cleavages do not seem to have adverse effects on solubility. Post-translationally, S-methylation and glutathionylation occur in normal young lenses and do not seem to be detrimental.

Functionally, crystallins are the dominant structural components of the vertebrate eye lens. The protein is Beta-crystallin A3 of Homo sapiens (Human).